The following is an 856-amino-acid chain: DNA mismatch repair protein MutS (856 aa).

Glycine 615 to serine 622 provides a ligand contact to ATP. The segment covering glutamate 798–lysine 807 has biased composition (polar residues). The interval glutamate 798–glutamine 817 is disordered.

It belongs to the DNA mismatch repair MutS family.

This protein is involved in the repair of mismatches in DNA. It is possible that it carries out the mismatch recognition step. This protein has a weak ATPase activity. The chain is DNA mismatch repair protein MutS from Photobacterium profundum (strain SS9).